A 453-amino-acid polypeptide reads, in one-letter code: AP-4 complex subunit mu-1 (453 aa).

Positions 184-452 (KNEVFLDVVE…LSHSNAYVIR (269 aa)) constitute an MHD domain. The tract at residues 383-403 (PGLQGPPSRGPSPSAPPLGLG) is disordered.

Belongs to the adaptor complexes medium subunit family. Adaptor protein complex 4 (AP-4) is a heterotetramer composed of two large adaptins (epsilon-type subunit AP4E1 and beta-type subunit AP4B1), a medium adaptin (mu-type subunit AP4M1) and a small adaptin (sigma-type AP4S1). Interacts with tyrosine-based sorting signals on the cytoplasmic tail of cargo proteins such as APP, ATG9A, LAMP2 and NAGPA. Interacts with the C-terminal domain of GRID2. Interacts with GRIA1 and GRIA2; the interaction is indirect via CACNG3. Interacts with CACNG3; CACNG3 associates GRIA1 and GRIA2 with the adaptor protein complex 4 (AP-4) to target them to the somatodendritic compartment of neurons. Interacts with HOOK1 and HOOK2; the interactions are direct, mediate the interaction between FTS-Hook-FHIP (FHF) complex and AP-4 and the perinuclear distribution of AP-4. High levels in the olfactory bulb, the cerebral cortex, the granule and Purkinje cell layers of the cerebellar cortex and the CA3 region of the hippocampus. Low levels found in molecular layer of cerebellum.

It is found in the golgi apparatus. It localises to the trans-Golgi network membrane. The protein resides in the early endosome. In terms of biological role, component of the adaptor protein complex 4 (AP-4). Adaptor protein complexes are vesicle coat components involved both in vesicle formation and cargo selection. They control the vesicular transport of proteins in different trafficking pathways. AP-4 forms a non clathrin-associated coat on vesicles departing the trans-Golgi network (TGN) and may be involved in the targeting of proteins from the trans-Golgi network (TGN) to the endosomal-lysosomal system. It is also involved in protein sorting to the basolateral membrane in epithelial cells and the proper asymmetric localization of somatodendritic proteins in neurons. Within AP-4, the mu-type subunit AP4M1 is directly involved in the recognition and binding of tyrosine-based sorting signals found in the cytoplasmic part of cargos. The adaptor protein complex 4 (AP-4) may also recognize other types of sorting signal. The protein is AP-4 complex subunit mu-1 of Rattus norvegicus (Rat).